The following is a 195-amino-acid chain: Probable GTP-binding protein EngB (195 aa).

The EngB-type G domain occupies 22 to 195; the sequence is GRPEVALAGR…WAALLPFLTE (174 aa). GTP contacts are provided by residues 30 to 37, 57 to 61, 75 to 78, 142 to 145, and 174 to 176; these read GRSNVGKS, GKTQT, DVPG, TKAD, and FSS. 2 residues coordinate Mg(2+): Ser-37 and Thr-59.

It belongs to the TRAFAC class TrmE-Era-EngA-EngB-Septin-like GTPase superfamily. EngB GTPase family. Requires Mg(2+) as cofactor.

Its function is as follows. Necessary for normal cell division and for the maintenance of normal septation. The chain is Probable GTP-binding protein EngB from Geobacillus thermodenitrificans (strain NG80-2).